The chain runs to 327 residues: Ribosomal RNA large subunit methyltransferase F (327 aa).

Positions 1 to 24 (MPRKTSSQPRPAEPKAVLHPRNRH) are disordered.

The protein belongs to the methyltransferase superfamily. METTL16/RlmF family.

Its subcellular location is the cytoplasm. The catalysed reaction is adenosine(1618) in 23S rRNA + S-adenosyl-L-methionine = N(6)-methyladenosine(1618) in 23S rRNA + S-adenosyl-L-homocysteine + H(+). Functionally, specifically methylates the adenine in position 1618 of 23S rRNA. This chain is Ribosomal RNA large subunit methyltransferase F, found in Stutzerimonas stutzeri (strain A1501) (Pseudomonas stutzeri).